We begin with the raw amino-acid sequence, 209 residues long: Cytidylate kinase (209 aa).

9 to 17 (GPAAAGKGT) contacts ATP.

The protein belongs to the cytidylate kinase family. Type 1 subfamily.

The protein localises to the cytoplasm. The enzyme catalyses CMP + ATP = CDP + ADP. It carries out the reaction dCMP + ATP = dCDP + ADP. In Granulibacter bethesdensis (strain ATCC BAA-1260 / CGDNIH1), this protein is Cytidylate kinase.